Here is a 404-residue protein sequence, read N- to C-terminus: Cysteine desulfurase IscS (404 aa).

Pyridoxal 5'-phosphate-binding positions include 75 to 76, N155, Q183, and 203 to 205; these read AT and SAH. K206 carries the N6-(pyridoxal phosphate)lysine modification. Residue T243 coordinates pyridoxal 5'-phosphate. C328 acts as the Cysteine persulfide intermediate in catalysis. Position 328 (C328) interacts with [2Fe-2S] cluster.

It belongs to the class-V pyridoxal-phosphate-dependent aminotransferase family. NifS/IscS subfamily. In terms of assembly, homodimer. Forms a heterotetramer with IscU, interacts with other sulfur acceptors. It depends on pyridoxal 5'-phosphate as a cofactor.

It is found in the cytoplasm. The catalysed reaction is (sulfur carrier)-H + L-cysteine = (sulfur carrier)-SH + L-alanine. It functions in the pathway cofactor biosynthesis; iron-sulfur cluster biosynthesis. In terms of biological role, master enzyme that delivers sulfur to a number of partners involved in Fe-S cluster assembly, tRNA modification or cofactor biosynthesis. Catalyzes the removal of elemental sulfur atoms from cysteine to produce alanine. Functions as a sulfur delivery protein for Fe-S cluster synthesis onto IscU, an Fe-S scaffold assembly protein, as well as other S acceptor proteins. This Ruthia magnifica subsp. Calyptogena magnifica protein is Cysteine desulfurase IscS.